A 228-amino-acid chain; its full sequence is MVSAMPRPLHEIMESGWAEALEPVADRIAQMGDFLRQEVAEGRTYLPAGENVLRAFQQPFDQVRVLLVGQDPYPTPGHAVGLSFSVSPEVRRLPGSLRNIFLEYTQDLGYPMPSSGDLTPWAERGVLLLNRVLTVTPRKPGSHRGKGWEAVTDQAIRALAARGKPLVAILWGRDARSLRPLMPDVPCVESAHPSPMSAHHGFFGSRPFSRANALLEQQGAEPMDWRLP.

Catalysis depends on Asp-71, which acts as the Proton acceptor.

The protein belongs to the uracil-DNA glycosylase (UDG) superfamily. UNG family.

Its subcellular location is the cytoplasm. The enzyme catalyses Hydrolyzes single-stranded DNA or mismatched double-stranded DNA and polynucleotides, releasing free uracil.. Functionally, excises uracil residues from the DNA which can arise as a result of misincorporation of dUMP residues by DNA polymerase or due to deamination of cytosine. This chain is Uracil-DNA glycosylase, found in Thermobifida fusca (strain YX).